A 421-amino-acid polypeptide reads, in one-letter code: Probable mitochondrial chaperone BCS1-A (421 aa).

Residues 1–10 (MNHLKDQSKS) lie on the Mitochondrial intermembrane side of the membrane. Residues 11-31 (IVLGISSGIGIFLISGGINIF) traverse the membrane as a helical segment. The Mitochondrial matrix portion of the chain corresponds to 32-421 (KNVGQYILNR…VQSITPFNLN (390 aa)). Position 228-235 (228-235 (GEPGNGKS)) interacts with ATP.

The protein belongs to the AAA ATPase family. BCS1 subfamily.

Its subcellular location is the mitochondrion inner membrane. The enzyme catalyses ATP + H2O = ADP + phosphate + H(+). Functionally, chaperone necessary for the assembly of mitochondrial respiratory chain complex III. The protein is Probable mitochondrial chaperone BCS1-A (bcs1la) of Dictyostelium discoideum (Social amoeba).